We begin with the raw amino-acid sequence, 432 residues long: Fibroleukin (432 aa).

The first 19 residues, 1–19, serve as a signal peptide directing secretion; that stretch reads MRLPGWLWLSSAVLAACRA. An N-linked (GlcNAc...) asparagine glycan is attached at Asn-24. The stretch at 71-157 forms a coiled coil; sequence GSMEEVLKEV…QGRLETLHLV (87 aa). Residues 100–122 are disordered; it reads QADDHRDPGGNGGNGAETAEDSR. N-linked (GlcNAc...) asparagine glycans are attached at residues Asn-172, Asn-228, Asn-256, and Asn-329. Residues 197 to 429 form the Fibrinogen C-terminal domain; that stretch reads PVQHLIYKDC…QAKMMIRPKN (233 aa). A disulfide bridge links Cys-206 with Cys-235. An intrachain disulfide couples Cys-364 to Cys-377.

As to quaternary structure, homotetramer; disulfide-linked. As to expression, constitutively expressed in cytotoxic T-cells.

The protein resides in the secreted. In terms of biological role, converts prothrombin to thrombin. This Mus musculus (Mouse) protein is Fibroleukin (Fgl2).